The chain runs to 457 residues: Cystathionine beta-lyase (457 aa).

The disordered stretch occupies residues 1-41 (MSTPNSDSPAAQAAKKVFSRLDLDGHNLPPSPAPSSPHNGR).

It belongs to the trans-sulfuration enzymes family. Pyridoxal 5'-phosphate serves as cofactor.

The protein resides in the cytoplasm. It localises to the nucleus. The catalysed reaction is L,L-cystathionine + H2O = L-homocysteine + pyruvate + NH4(+). It carries out the reaction an S-substituted L-cysteine + H2O = a thiol + pyruvate + NH4(+). It participates in amino-acid biosynthesis; L-methionine biosynthesis via de novo pathway; L-homocysteine from L-cystathionine: step 1/1. Its function is as follows. Involved in de novo synthesis of methionine. In Neurospora crassa (strain ATCC 24698 / 74-OR23-1A / CBS 708.71 / DSM 1257 / FGSC 987), this protein is Cystathionine beta-lyase (met-2).